We begin with the raw amino-acid sequence, 175 residues long: Large ribosomal subunit protein uL5 (175 aa).

This sequence belongs to the universal ribosomal protein uL5 family. As to quaternary structure, part of the 50S ribosomal subunit; contacts the 5S rRNA and probably tRNA. Forms a bridge to the 30S subunit in the 70S ribosome.

Functionally, this is one of the proteins that bind and probably mediate the attachment of the 5S RNA into the large ribosomal subunit, where it forms part of the central protuberance. In the 70S ribosome it contacts protein S13 of the 30S subunit (bridge B1b), connecting the 2 subunits; this bridge is implicated in subunit movement. May contact the P site tRNA; the 5S rRNA and some of its associated proteins might help stabilize positioning of ribosome-bound tRNAs. The polypeptide is Large ribosomal subunit protein uL5 (Halobacterium salinarum (strain ATCC 29341 / DSM 671 / R1)).